The chain runs to 58 residues: Large ribosomal subunit protein bL32 (58 aa).

It belongs to the bacterial ribosomal protein bL32 family.

This chain is Large ribosomal subunit protein bL32, found in Staphylococcus aureus (strain NCTC 8325 / PS 47).